Here is an 818-residue protein sequence, read N- to C-terminus: Structure-specific endonuclease subunit SLX4 (818 aa).

5 disordered regions span residues 1-39 (MSFL…PSAS), 53-151 (RDPY…SSSN), 279-324 (FSEG…HQDS), 413-437 (NAQF…KTSK), and 587-712 (MLPA…MASE). Positions 28–39 (VIDSSPSVPSAS) are enriched in low complexity. The span at 90 to 103 (PSERTKDAHGKDRF) shows a compositional bias: basic and acidic residues. A compositionally biased stretch (low complexity) spans 306–316 (TTSTTITSLST). Positions 426-437 (TRSPCSNPKTSK) are enriched in polar residues. Positions 604–618 (QMSKRDTIKSRDIRA) are enriched in basic and acidic residues. 3 stretches are compositionally biased toward polar residues: residues 621–640 (SRSN…QNTG), 652–672 (SSKS…TQSV), and 696–712 (SLAS…MASE).

This sequence belongs to the SLX4 family. In terms of assembly, forms a heterodimer with SLX1. Phosphorylated in response to DNA damage.

The protein resides in the nucleus. In terms of biological role, regulatory subunit of the SLX1-SLX4 structure-specific endonuclease that resolves DNA secondary structures generated during DNA repair and recombination. Has endonuclease activity towards branched DNA substrates, introducing single-strand cuts in duplex DNA close to junctions with ss-DNA. In Uncinocarpus reesii (strain UAMH 1704), this protein is Structure-specific endonuclease subunit SLX4.